Consider the following 160-residue polypeptide: Small ribosomal subunit protein uS10m (160 aa).

The protein belongs to the universal ribosomal protein uS10 family. In terms of assembly, component of the mitochondrial ribosome small subunit (28S) which comprises a 12S rRNA and about 30 distinct proteins.

The protein resides in the mitochondrion. The polypeptide is Small ribosomal subunit protein uS10m (Mrps10) (Mus musculus (Mouse)).